The following is a 2130-amino-acid chain: Dedicator of cytokinesis protein 7 (2130 aa).

Residue serine 30 is modified to Phosphoserine. The segment at 137 to 175 (GFNPNTLDKQKERQKGLPRQVFESDEAPDGSSYQDEQDD) is disordered. 2 positions are modified to phosphoserine: serine 180 and serine 182. Positions 365–395 (FKEADATKNKEKLEKLKSQADQFCQRLGKYR) form a coiled coil. Residue lysine 381 is modified to N6-methyllysine. A Phosphothreonine modification is found at threonine 450. A Phosphoserine modification is found at serine 452. A C2 DOCK-type domain is found at 561–727 (RNLLYIYPQS…GVFNVEVVAV (167 aa)). A phosphoserine mark is found at serine 862, serine 864, serine 882, serine 888, serine 896, serine 900, and serine 905. Residues 888-901 (SLNLNRSRSLSNSN) are compositionally biased toward low complexity. The interval 888-966 (SLNLNRSRSL…SCNRMSSHTE (79 aa)) is disordered. A phosphothreonine mark is found at threonine 907 and threonine 909. 8 positions are modified to phosphoserine: serine 910, serine 929, serine 963, serine 1382, serine 1420, serine 1422, serine 1424, and serine 1428. A compositionally biased stretch (polar residues) spans 942-966 (SNPSPSAESTQAMDRSCNRMSSHTE). The DOCKER domain maps to 1668 to 2104 (KGYQTSPDLR…LQPLINRKIP (437 aa)). Lysine 1952 bears the N6-acetyllysine mark. Residues 2076–2102 (DQKEYQRELERNYHRLKEALQPLINRK) adopt a coiled-coil conformation. Position 2119 is a phosphoserine (serine 2119).

This sequence belongs to the DOCK family. Component of the DOCK7-induced septin displacement/DISP complex, at least composed of DOCK7, LRCH3 and MYO6. Interacts with TSC1. Interacts with nucleotide-free RAC1 and RAC3. Interacts with TACC3. Interacts with CRY1. Interacts with NOD2.

The protein localises to the cell projection. Its subcellular location is the axon. Its function is as follows. Functions as a guanine nucleotide exchange factor (GEF), which activates Rac1 and Rac3 Rho small GTPases by exchanging bound GDP for free GTP. Does not have a GEF activity for CDC42. Required for STMN1 'Ser-15' phosphorylation during axon formation and consequently for neuronal polarization. As part of the DISP complex, may regulate the association of septins with actin and thereby regulate the actin cytoskeleton. Has a role in pigmentation. Involved in the regulation of cortical neurogenesis through the control of radial glial cells (RGCs) proliferation versus differentiation; negatively regulates the basal-to-apical interkinetic nuclear migration of RGCs by antagonizing the microtubule growth-promoting function of TACC3. The sequence is that of Dedicator of cytokinesis protein 7 (Dock7) from Mus musculus (Mouse).